A 785-amino-acid chain; its full sequence is Protein SEY1 (785 aa).

The segment at 1–31 (MASAAPINLRAQDTPYVPPTSLPTSSSQTGS) is disordered. Residues 1–689 (MASAAPINLR…KRSTVASIAQ (689 aa)) lie on the Cytoplasmic side of the membrane. Residues 22 to 31 (LPTSSSQTGS) show a composition bias toward low complexity. The 221-residue stretch at 61–281 (GFSYNIVAVF…SSDYLFKPAY (221 aa)) folds into the GB1/RHD3-type G domain. GTP is bound at residue 71 to 78 (GSQSTGKS). Positions 458–482 (SWEEELELLRDEIRAVADQCRKDET) form a coiled coil. A helical membrane pass occupies residues 690–710 (IPYWIYGVLVVLGWNEAMLVL). Residues 711–713 (FNP) are Lumenal-facing. A helical membrane pass occupies residues 714–734 (LYFAFLLLAMATSYIIAQLGL). Residues 735 to 785 (VGPLFQVTRTVGSEIQRQATARLREHFSQPVLAEPVQVGPSRDREEVGQIQ) lie on the Cytoplasmic side of the membrane.

It belongs to the TRAFAC class dynamin-like GTPase superfamily. GB1/RHD3 GTPase family. RHD3 subfamily.

Its subcellular location is the endoplasmic reticulum membrane. Its function is as follows. Cooperates with the reticulon proteins and tubule-shaping DP1 family proteins to generate and maintain the structure of the tubular endoplasmic reticulum network. Has GTPase activity, which is required for its function in ER organization. This Laccaria bicolor (strain S238N-H82 / ATCC MYA-4686) (Bicoloured deceiver) protein is Protein SEY1.